A 194-amino-acid chain; its full sequence is Troponin I 4 (194 aa).

The segment at 1-27 (MSDVDADEARKMAERERKKEEVRKRLE) is disordered. The segment covering 7-27 (DEARKMAERERKKEEVRKRLE) has biased composition (basic and acidic residues).

This sequence belongs to the troponin I family. Expression is detected only in pharyngeal muscle cells from embryos to adults.

Its function is as follows. Troponin I is the inhibitory subunit of troponin, the thin filament regulatory complex which confers calcium-sensitivity to muscle actomyosin ATPase activity. In Caenorhabditis elegans, this protein is Troponin I 4 (tni-4).